Consider the following 837-residue polypeptide: Histone acetyltransferase KAT2A (837 aa).

Positions 1-99 (MAEPSQAPTP…RKAQVRGLPR (99 aa)) are disordered. N-acetylalanine is present on Ala-2. A compositionally biased stretch (pro residues) spans 7–51 (APTPAPAAQPRPLQSPAPAPTPTPAPSPASAPIPTPTPAPAPAPA). Residues 58-74 (TGTGGPGVGSGGAGSGG) show a composition bias toward gly residues. Residues 75 to 87 (DPARPGLSQQQRA) are compositionally biased toward low complexity. The span at 88-99 (SQRKAQVRGLPR) shows a compositional bias: basic residues. Ser-307 bears the Phosphoserine mark. The interval 407–434 (FSPSMGGGSNSSLSLDSAGAEPMPGEKR) is disordered. The segment covering 416–425 (NSSLSLDSAG) has biased composition (low complexity). Residues 503–656 (VIGNSLTPKA…GATLMECELN (154 aa)) form the N-acetyltransferase domain. Lys-549 is modified (N6-acetyllysine). Glu-575 (proton donor/acceptor) is an active-site residue. Acetyl-CoA contacts are provided by residues 579 to 581 (CAV), 586 to 592 (QVKGYGT), and Tyr-617. Succinyl-CoA is bound by residues 579-581 (CAV), 586-592 (QVKGYGT), and Tyr-617. The interval 639–648 (LGYIKDYEGA) is loop 3. Lys-728 participates in a covalent cross-link: Glycyl lysine isopeptide (Lys-Gly) (interchain with G-Cter in SUMO2). Residues 728 to 832 (KDPDQLYTTL…KFFYFKLKEG (105 aa)) form the Bromo domain. Thr-735 carries the post-translational modification Phosphothreonine. Residues Lys-759 and Lys-791 each participate in a glycyl lysine isopeptide (Lys-Gly) (interchain with G-Cter in SUMO2) cross-link.

This sequence belongs to the acetyltransferase family. GCN5 subfamily. In terms of assembly, homooligomer; may form a tetramer of homodimers. Interacts with EP300, CREBBP and ADA2. Component of the TFTC-HAT complex, at least composed of TAF5L, TAF6L, TAF3, TADA3L, SUPT3H/SPT3, TAF2/TAFII150, TAF4/TAFII135, TAF5/TAFII100, KAT2A/GCN5L2, TAF10 and TRRAP. Component of the STAGA transcription coactivator-HAT complex, at least composed of SUPT3H, KAT2A, SUPT7L, TAF5L, TAF6L, TADA3L, TAD1L, TAF10, TAF12, TRRAP and TAF9. The STAGA core complex is associated with a subcomplex required for histone deubiquitination composed of ATXN7L3, ENY2 and USP22. Component of the ADA2A-containing complex (ATAC), composed of KAT14, KAT2A, TADA2L, TADA3L, ZZ3, MBIP, WDR5, YEATS2, CCDC101 and DR1. In the complex, it probably interacts directly with KAT14, MBIP and WDR5. Interacts with PML. Interacts with CEBPB. Interacts with TACC1, TACC2 and TACC3. Interacts with RELA. Interacts with NFATC2. Interacts with TBX5. Interacts with PLK4. Associates with the 2-oxoglutarate dehydrogenase complex. Interacts with XPC; leading to KAT2A recruitment to promoters and subsequent acetylation of histones. Interacts with ERCC3/XPB; leading to KAT2A recruitment to promoters and subsequent acetylation of histones. Interacts with ISL1. Interactions of ISL1 with MLIP1 or KAT2A may be mutually exclusive. (Microbial infection) Interacts with and acetylates HIV-1 Tat. In terms of processing, acetylated at Lys-549, inhibiting the protein acetyltransferase activity. Deacetylation at Lys-549 by SIRT6 promotes phosphorylation at Ser-307 and Thr-735 and subsequent activation of the protein acetyltransferase activity, leading to acetylation and inactivation of PPARGC1A. Expressed in all tissues tested.

The protein resides in the nucleus. The protein localises to the chromosome. It localises to the cytoplasm. Its subcellular location is the cytoskeleton. It is found in the microtubule organizing center. The protein resides in the centrosome. It catalyses the reaction L-lysyl-[histone] + acetyl-CoA = N(6)-acetyl-L-lysyl-[histone] + CoA + H(+). It carries out the reaction L-lysyl-[protein] + acetyl-CoA = N(6)-acetyl-L-lysyl-[protein] + CoA + H(+). The enzyme catalyses succinyl-CoA + L-lysyl-[protein] = N(6)-succinyl-L-lysyl-[protein] + CoA + H(+). The catalysed reaction is glutaryl-CoA + L-lysyl-[protein] = N(6)-glutaryl-L-lysyl-[protein] + CoA + H(+). In terms of biological role, protein lysine acyltransferase that can act as a acetyltransferase, glutaryltransferase, succinyltransferase or malonyltransferase, depending on the context. Acts as a histone lysine succinyltransferase: catalyzes succinylation of histone H3 on 'Lys-79' (H3K79succ), with a maximum frequency around the transcription start sites of genes. Succinylation of histones gives a specific tag for epigenetic transcription activation. Association with the 2-oxoglutarate dehydrogenase complex, which provides succinyl-CoA, is required for histone succinylation. In different complexes, functions either as an acetyltransferase (HAT) or as a succinyltransferase: in the SAGA and ATAC complexes, acts as a histone acetyltransferase. Has significant histone acetyltransferase activity with core histones, but not with nucleosome core particles. Has a a strong preference for acetylation of H3 at 'Lys-9' (H3K9ac). Acetylation of histones gives a specific tag for epigenetic transcription activation. Recruited by the XPC complex at promoters, where it specifically mediates acetylation of histone variant H2A.Z.1/H2A.Z, thereby promoting expression of target genes. Involved in long-term memory consolidation and synaptic plasticity: acts by promoting expression of a hippocampal gene expression network linked to neuroactive receptor signaling. Acts as a positive regulator of T-cell activation: upon TCR stimulation, recruited to the IL2 promoter following interaction with NFATC2 and catalyzes acetylation of histone H3 at 'Lys-9' (H3K9ac), leading to promote IL2 expression. Required for growth and differentiation of craniofacial cartilage and bone by regulating acetylation of histone H3 at 'Lys-9' (H3K9ac). Regulates embryonic stem cell (ESC) pluripotency and differentiation. Also acetylates non-histone proteins, such as CEBPB, MRE11, PPARGC1A, PLK4 and TBX5. Involved in heart and limb development by mediating acetylation of TBX5, acetylation regulating nucleocytoplasmic shuttling of TBX5. Acts as a negative regulator of centrosome amplification by mediating acetylation of PLK4. Acts as a negative regulator of gluconeogenesis by mediating acetylation and subsequent inactivation of PPARGC1A. Also acts as a histone glutaryltransferase: catalyzes glutarylation of histone H4 on 'Lys-91' (H4K91glu), a mark that destabilizes nucleosomes by promoting dissociation of the H2A-H2B dimers from nucleosomes. Functionally, (Microbial infection) In case of HIV-1 infection, it is recruited by the viral protein Tat. Regulates Tat's transactivating activity and may help inducing chromatin remodeling of proviral genes. The chain is Histone acetyltransferase KAT2A from Homo sapiens (Human).